We begin with the raw amino-acid sequence, 216 residues long: Elongation factor Ts (216 aa).

The tract at residues 81 to 84 is involved in Mg(2+) ion dislocation from EF-Tu; sequence TDFV.

The protein belongs to the EF-Ts family.

Its subcellular location is the cytoplasm. Its function is as follows. Associates with the EF-Tu.GDP complex and induces the exchange of GDP to GTP. It remains bound to the aminoacyl-tRNA.EF-Tu.GTP complex up to the GTP hydrolysis stage on the ribosome. In Geobacter sp. (strain M21), this protein is Elongation factor Ts.